We begin with the raw amino-acid sequence, 484 residues long: Serine/threonine-protein kinase RIO1 (484 aa).

Residues 76–402 (ADLNGCLSTG…EFDNADHECS (327 aa)) form the Protein kinase domain. Lys125 and Leu198 together coordinate ATP. Residue Asp244 is the Proton acceptor of the active site. Residues Asn249 and Asp261 each coordinate Mg(2+). Residue Asp261 is the 4-aspartylphosphate intermediate of the active site. Residues 398–484 (DHECSSGTEE…KLVKKTKSKK (87 aa)) are disordered. Ser402, Ser403, Ser409, Ser416, Ser417, and Ser419 each carry phosphoserine; by CK2. The interaction with CKA2 stretch occupies residues 403 to 484 (SGTEEFSDDE…KLVKKTKSKK (82 aa)). Residues 407-434 (EFSDDEEDGSSGSEEDDEEEGEYYDDDE) show a composition bias toward acidic residues. Residues 440 to 484 (GKKHEDKDLKKLRKQEAKDAKREKRKTKVKKHIKKKLVKKTKSKK) are association with (pre-)40S ribosomal subunit. The segment covering 442–461 (KHEDKDLKKLRKQEAKDAKR) has biased composition (basic and acidic residues). The segment covering 462-484 (EKRKTKVKKHIKKKLVKKTKSKK) has biased composition (basic residues).

Belongs to the protein kinase superfamily. RIO-type Ser/Thr kinase family. Interacts with CKA2. Requires Mg(2+) as cofactor. In terms of processing, autophosphorylated. Phosphorylated by casein kinase II (CK2). Phosphorylation by CK2 stimulates RIO1 kinase activity and targets it for degradation at the G1/S transition of the cell cycle.

The protein resides in the cytoplasm. The enzyme catalyses L-seryl-[protein] + ATP = O-phospho-L-seryl-[protein] + ADP + H(+). It catalyses the reaction L-threonyl-[protein] + ATP = O-phospho-L-threonyl-[protein] + ADP + H(+). It carries out the reaction ATP + H2O = ADP + phosphate + H(+). Functionally, required for the final endonucleolytic cleavage at site D converting 20S pre-rRNA into the mature 18S rRNA. Required for the final steps of cytoplasmic maturation of the 40S ribosomal subunit. The association with the very late 40S subunit intermediate seems to follow RIO2 association with precursors of the 40S subunit and may involve a translation-like checkpoint point cycle preceeding the binding to the 60S ribosomal subunit. Despite the protein kinase domain is proposed to act predominantly as an ATPase. The catalytic activity regulates its dynamic association with the 40S subunit. Has a role in the cell cycle where it is required for entrance into S-phase and in the control of the onset of anaphase. Appears to also be involved in the maintenance of chromosome stability and correct mitotic segregation. The polypeptide is Serine/threonine-protein kinase RIO1 (RIO1) (Saccharomyces cerevisiae (strain ATCC 204508 / S288c) (Baker's yeast)).